Here is a 503-residue protein sequence, read N- to C-terminus: Methylthioalkylmalate synthase 3, chloroplastic (503 aa).

The N-terminal 51 residues, 1-51 (MASLLLTSSSMITTSCRSMVLRSGLPIGSSFPSLRLTRPYDKATLFVSCCS), are a transit peptide targeting the chloroplast. Residues 85–359 (VRVLDTTLRD…YTKIDSRQIM (275 aa)) form the Pyruvate carboxyltransferase domain.

This sequence belongs to the alpha-IPM synthase/homocitrate synthase family. Requires Mn(2+) as cofactor. Highly expressed in roots, leaves, and siliques. Lower amounts in stems and flowers.

The protein localises to the plastid. Its subcellular location is the chloroplast. It carries out the reaction an omega-(methylsulfanyl)-2-oxoalkanoate + acetyl-CoA + H2O = a 2-(omega-methylsulfanyl)alkylmalate + CoA + H(+). Not activated by ATP. Functionally, determines the side chain length of aliphatic glucosinolate structures. Accepts all the omega-methylthio-2-oxoalkanoic acids needed to form the known C3 to C8 glucosinolates. Also able to convert pyruvate to citramalate, 2-oxoisovalerate to isopropylmalate, 4-methyl-2-oxopentanoate and 5-methyl-2-oxohexanoate for Leu-derived glucosinolates, 3-methyl-2-oxopentanoate for Ile-derived glucosinolates and phenylpyruvate to phenylethylglucosinolate. This is Methylthioalkylmalate synthase 3, chloroplastic (MAM3) from Arabidopsis thaliana (Mouse-ear cress).